A 307-amino-acid polypeptide reads, in one-letter code: Glycine--tRNA ligase alpha subunit (307 aa).

The protein belongs to the class-II aminoacyl-tRNA synthetase family. Tetramer of two alpha and two beta subunits.

The protein resides in the cytoplasm. The catalysed reaction is tRNA(Gly) + glycine + ATP = glycyl-tRNA(Gly) + AMP + diphosphate. This is Glycine--tRNA ligase alpha subunit from Xylella fastidiosa (strain M23).